Consider the following 277-residue polypeptide: Type II restriction enzyme EcoRI (277 aa).

Residues Asp91, Glu111, and Lys113 contribute to the active site. Residues Asp91 and Glu111 each coordinate Mg(2+).

Belongs to the EcoRI type II restriction endonuclease family. In terms of assembly, homodimer. The cofactor is Mg(2+).

The enzyme catalyses Endonucleolytic cleavage of DNA to give specific double-stranded fragments with terminal 5'-phosphates.. Functionally, a P subtype restriction enzyme that recognizes the double-stranded sequence 5'-GAATTC-3' and cleaves after G-1. This Escherichia coli protein is Type II restriction enzyme EcoRI (ecoRIR).